The chain runs to 475 residues: uncharacterized protein (475 aa).

The segment at 42–292 (NLQNSLTGKT…NTRKGQRHNN (251 aa)) is disordered. 2 stretches are compositionally biased toward basic and acidic residues: residues 59–72 (EANHTSSDKSKSED) and 119–134 (IAEKQVEDRKLSDDSQ). 2 stretches are compositionally biased toward polar residues: residues 150-159 (ITPNFTHTPI) and 220-242 (NNTFGSQTVSSANGKEVPQTSED). Low complexity predominate over residues 243-263 (SSSQAPHHSSSSGHAPSQQGG). A compositionally biased stretch (basic residues) spans 277–289 (FHHKGRNTRKGQR). In terms of domain architecture, HTH La-type RNA-binding spans 319–408 (NPYLCDVQAF…MSIKVRRKET (90 aa)). Phosphothreonine is present on Thr408. Ser410 carries the phosphoserine modification.

It localises to the cytoplasm. This is an uncharacterized protein from Schizosaccharomyces pombe (strain 972 / ATCC 24843) (Fission yeast).